The sequence spans 120 residues: Small ribosomal subunit protein uS13 (120 aa).

Residues 96–120 are disordered; the sequence is PCRGQRTRTNARTRKGPRKAIAGKK.

It belongs to the universal ribosomal protein uS13 family. As to quaternary structure, part of the 30S ribosomal subunit. Forms a loose heterodimer with protein S19. Forms two bridges to the 50S subunit in the 70S ribosome.

Located at the top of the head of the 30S subunit, it contacts several helices of the 16S rRNA. In the 70S ribosome it contacts the 23S rRNA (bridge B1a) and protein L5 of the 50S subunit (bridge B1b), connecting the 2 subunits; these bridges are implicated in subunit movement. Contacts the tRNAs in the A and P-sites. The polypeptide is Small ribosomal subunit protein uS13 (Neisseria gonorrhoeae (strain ATCC 700825 / FA 1090)).